Here is a 546-residue protein sequence, read N- to C-terminus: Flavin-dependent oxygenase ucdF (546 aa).

The FAD-binding PCMH-type domain maps to 81 to 263 (QGRIPYYAVM…VNTTIRTFPD (183 aa)).

This sequence belongs to the oxygen-dependent FAD-linked oxidoreductase family.

Functionally, nonribosomal peptide synthetase that mediates the biosynthesis of usterphenyllins and uscandidusins, p-terphenyl derivatives. The function of ucdF within the pathway still remains to be determined. UcdE further prenylates position C-14 of ring C of usterphenyllin B to form usterphenyllin A. The pathway begin with the biosynthesis of 4-hydroxyphenylpyruvate (HPPA) from L-tyrosine, possibly by the aminotransferase ucdG. The nonribosomal peptide synthetase ucdA then condenses two HPPA units to produce atromentin. The key step in this pathway is the reduction and dehydration of atromentin to form a terphenyl triol intermediate, performed by the NAD-dependent dehydrogenase ucdB. Further O-methylation by the methyltransferase ucdC forms terphenyllin carrying two methoxy moieties at C-9 and C-12, and subsequent dihydroxylation at C-3 of ring A and C-15 of ring C by the flavin-dependent oxygenase ucdD leads to 3,15-dihydroxyterphenyllin. Prenylation by ucdE at position C-5 of ring A forms usterphenyllin B, and is followed by a second prenylation at position C-14 of ring C to form usterphenyllin A. The following furan ring formation that leads to uscandidusins A and B was proven to be an unexpected spontaneous non-enzymatic reaction. The chain is Flavin-dependent oxygenase ucdF from Aspergillus ustus.